A 368-amino-acid chain; its full sequence is E3 ubiquitin-protein ligase ATL31 (368 aa).

Positions 1–23 (MDPIKHISLPVLVLFLLLSVSAG) are cleaved as a signal peptide. A helical membrane pass occupies residues 46–66 (AVVVVVVIAALFFMGFFTVYI). Residues 124-166 (CAICLNEFEDDETLRLLPKCDHVFHPHCIGAWLQGHVTCPVCR) form an RING-type; atypical zinc finger. Serine 247 carries the phosphoserine modification. The interval 342–368 (NKDGEGTSSVQHIGTVGSTSGSLRLPV) is disordered. Residues 347-368 (GTSSVQHIGTVGSTSGSLRLPV) are compositionally biased toward polar residues.

The protein belongs to the RING-type zinc finger family. ATL subfamily.

The protein localises to the membrane. It carries out the reaction S-ubiquitinyl-[E2 ubiquitin-conjugating enzyme]-L-cysteine + [acceptor protein]-L-lysine = [E2 ubiquitin-conjugating enzyme]-L-cysteine + N(6)-ubiquitinyl-[acceptor protein]-L-lysine.. Its pathway is protein modification; protein ubiquitination. In terms of biological role, E3 ubiquitin-protein ligase that is required for the plant C/N response during seedling growth transition. May be involved in the early steps of the plant defense signaling pathway. The chain is E3 ubiquitin-protein ligase ATL31 (ATL31) from Arabidopsis thaliana (Mouse-ear cress).